Reading from the N-terminus, the 30-residue chain is Trypsin inhibitor 2 (30 aa).

Intrachain disulfides connect C3/C20, C10/C22, and C16/C29.

Belongs to the protease inhibitor I7 (squash-type serine protease inhibitor) family.

The protein resides in the secreted. Functionally, inhibits trypsin. This chain is Trypsin inhibitor 2, found in Luffa aegyptiaca (Sponge gourd).